The primary structure comprises 215 residues: Holliday junction branch migration complex subunit RuvA (215 aa).

Positions Met1–Cys67 are domain I. A domain II region spans residues Asp68–Leu146. Positions Ser147 to Pro158 are flexible linker. Residues Leu159–Ala215 are domain III.

Belongs to the RuvA family. As to quaternary structure, homotetramer. Forms an RuvA(8)-RuvB(12)-Holliday junction (HJ) complex. HJ DNA is sandwiched between 2 RuvA tetramers; dsDNA enters through RuvA and exits via RuvB. An RuvB hexamer assembles on each DNA strand where it exits the tetramer. Each RuvB hexamer is contacted by two RuvA subunits (via domain III) on 2 adjacent RuvB subunits; this complex drives branch migration. In the full resolvosome a probable DNA-RuvA(4)-RuvB(12)-RuvC(2) complex forms which resolves the HJ.

The protein resides in the cytoplasm. Functionally, the RuvA-RuvB-RuvC complex processes Holliday junction (HJ) DNA during genetic recombination and DNA repair, while the RuvA-RuvB complex plays an important role in the rescue of blocked DNA replication forks via replication fork reversal (RFR). RuvA specifically binds to HJ cruciform DNA, conferring on it an open structure. The RuvB hexamer acts as an ATP-dependent pump, pulling dsDNA into and through the RuvAB complex. HJ branch migration allows RuvC to scan DNA until it finds its consensus sequence, where it cleaves and resolves the cruciform DNA. The polypeptide is Holliday junction branch migration complex subunit RuvA (Synechococcus sp. (strain WH7803)).